The sequence spans 522 residues: Amphoterin-induced protein 2 (522 aa).

The signal sequence occupies residues 1-39 (MSLRVHTLPTLLGAVVRPGCRELLCLLMITVAVGPGASG). Residues 40 to 68 (VCPTACICATDIVSCTNKHLSKVPGNLFR) enclose the LRRNT domain. The Extracellular segment spans residues 40 to 398 (VCPTACICAT…RSHAHEAFNT (359 aa)). 2 cysteine pairs are disulfide-bonded: Cys41–Cys47 and Cys45–Cys54. LRR repeat units lie at residues 69 to 90 (LMKR…WIPV), 94 to 115 (KLNT…SFST), 118 to 139 (NLKC…VFQE), 142 to 163 (VLEV…AFGG), 166 to 187 (QLQK…LYVG), and 193 to 214 (ELMF…HINL). Asn104 carries N-linked (GlcNAc...) asparagine glycosylation. An LRRCT domain is found at 228–284 (NPFVCDCSLYSLLVFWYRRHFSSVMDFKNDYTCRLWSDSRHSRQVLLLQDSFMNCSD). Intrachain disulfides connect Cys232-Cys260 and Cys234-Cys282. Residues Asn281, Asn288, Asn345, Asn373, Asn381, and Asn384 are each glycosylated (N-linked (GlcNAc...) asparagine). The 91-residue stretch at 289–379 (GSFRALGFIH…RLLNETVDVT (91 aa)) folds into the Ig-like C2-type domain. Cys310 and Cys363 are joined by a disulfide. The helical transmembrane segment at 399–419 (AFTTLAACVASIVLVLLYLYL) threads the bilayer. The Cytoplasmic segment spans residues 420–522 (TPCPCKCKTK…FSDTPFVAST (103 aa)). A disordered region spans residues 501–522 (RGKSDSDSVNSVFSDTPFVAST).

The protein belongs to the immunoglobulin superfamily. AMIGO family. Binds itself as well as AMIGO1 and AMIGO3.

Its subcellular location is the cell membrane. It is found in the nucleus. Its function is as follows. Required for depolarization-dependent survival of cultured cerebellar granule neurons. May mediate homophilic as well as heterophilic cell-cell interaction with AMIGO1 or AMIGO3. May contribute to signal transduction through its intracellular domain. This chain is Amphoterin-induced protein 2, found in Pongo abelii (Sumatran orangutan).